A 457-amino-acid polypeptide reads, in one-letter code: Pup--protein ligase (457 aa).

Glu-9 is a Mg(2+) binding site. Arg-53 serves as a coordination point for ATP. Mg(2+) is bound at residue Tyr-55. Catalysis depends on Asp-57, which acts as the Proton acceptor. Glu-63 is a Mg(2+) binding site. Residues Thr-66 and Trp-424 each contribute to the ATP site.

Belongs to the Pup ligase/Pup deamidase family. Pup-conjugating enzyme subfamily.

The enzyme catalyses ATP + [prokaryotic ubiquitin-like protein]-L-glutamate + [protein]-L-lysine = ADP + phosphate + N(6)-([prokaryotic ubiquitin-like protein]-gamma-L-glutamyl)-[protein]-L-lysine.. The protein operates within protein degradation; proteasomal Pup-dependent pathway. Its pathway is protein modification; protein pupylation. Its function is as follows. Catalyzes the covalent attachment of the prokaryotic ubiquitin-like protein modifier Pup to the proteasomal substrate proteins, thereby targeting them for proteasomal degradation. This tagging system is termed pupylation. The ligation reaction involves the side-chain carboxylate of the C-terminal glutamate of Pup and the side-chain amino group of a substrate lysine. This Xylanimonas cellulosilytica (strain DSM 15894 / JCM 12276 / CECT 5975 / KCTC 9989 / LMG 20990 / NBRC 107835 / XIL07) protein is Pup--protein ligase.